Reading from the N-terminus, the 450-residue chain is Cysteine proteinase (450 aa).

Positions 1–20 (MPRTEMVRFVRLPVVLLAMA) are cleaved as a signal peptide. Positions 21–125 (ACLASVALGS…RKTVNVTTGR (105 aa)) are cleaved as a propeptide — activation peptide. N-linked (GlcNAc...) asparagine glycosylation is present at Asn-120. Cysteines 147 and 188 form a disulfide. Catalysis depends on residues Cys-150, His-287, and Asn-307. The segment at 343–450 (TPPPPPPPPP…TKAARLVPHQ (108 aa)) is 108-residue extension. N-linked (GlcNAc...) asparagine glycosylation is present at Asn-397.

It belongs to the peptidase C1 family.

It localises to the lysosome. The cysteine proteinases have a potential role in host-parasite interaction and virulence. In Trypanosoma brucei brucei, this protein is Cysteine proteinase.